We begin with the raw amino-acid sequence, 302 residues long: Sulfate adenylyltransferase subunit 2 (302 aa).

It belongs to the PAPS reductase family. CysD subfamily. Heterodimer composed of CysD, the smaller subunit, and CysN.

The enzyme catalyses sulfate + ATP + H(+) = adenosine 5'-phosphosulfate + diphosphate. The protein operates within sulfur metabolism; hydrogen sulfide biosynthesis; sulfite from sulfate: step 1/3. Functionally, with CysN forms the ATP sulfurylase (ATPS) that catalyzes the adenylation of sulfate producing adenosine 5'-phosphosulfate (APS) and diphosphate, the first enzymatic step in sulfur assimilation pathway. APS synthesis involves the formation of a high-energy phosphoric-sulfuric acid anhydride bond driven by GTP hydrolysis by CysN coupled to ATP hydrolysis by CysD. In Klebsiella pneumoniae (strain 342), this protein is Sulfate adenylyltransferase subunit 2.